The primary structure comprises 164 residues: 3-hydroxyacyl-[acyl-carrier-protein] dehydratase FabZ (164 aa).

Histidine 70 is a catalytic residue.

The protein belongs to the thioester dehydratase family. FabZ subfamily.

The protein localises to the cytoplasm. The enzyme catalyses a (3R)-hydroxyacyl-[ACP] = a (2E)-enoyl-[ACP] + H2O. In terms of biological role, involved in unsaturated fatty acids biosynthesis. Catalyzes the dehydration of short chain beta-hydroxyacyl-ACPs and long chain saturated and unsaturated beta-hydroxyacyl-ACPs. This Synechocystis sp. (strain ATCC 27184 / PCC 6803 / Kazusa) protein is 3-hydroxyacyl-[acyl-carrier-protein] dehydratase FabZ.